The primary structure comprises 46 residues: Large ribosomal subunit protein bL36B (46 aa).

The protein belongs to the bacterial ribosomal protein bL36 family.

The polypeptide is Large ribosomal subunit protein bL36B (Enterobacter sp. (strain 638)).